The following is a 560-amino-acid chain: Protein yellow (560 aa).

Residues Met1–Ala30 form the signal peptide. Residues Asn153 and Asn224 are each glycosylated (N-linked (GlcNAc...) asparagine). The segment at Gln452–Val492 is disordered. Residues Ser471–Ala480 show a composition bias toward low complexity.

This sequence belongs to the major royal jelly protein family.

It localises to the secreted. Its function is as follows. Controls the pigmentation pattern of the adult cuticle and larval mouth parts. The chain is Protein yellow (y) from Drosophila pseudoobscura pseudoobscura (Fruit fly).